A 120-amino-acid polypeptide reads, in one-letter code: Large ribosomal subunit protein uL18 (120 aa).

This sequence belongs to the universal ribosomal protein uL18 family. In terms of assembly, part of the 50S ribosomal subunit; part of the 5S rRNA/L5/L18/L25 subcomplex. Contacts the 5S and 23S rRNAs.

Functionally, this is one of the proteins that bind and probably mediate the attachment of the 5S RNA into the large ribosomal subunit, where it forms part of the central protuberance. The protein is Large ribosomal subunit protein uL18 of Beijerinckia indica subsp. indica (strain ATCC 9039 / DSM 1715 / NCIMB 8712).